A 167-amino-acid chain; its full sequence is NAD(P)H-quinone oxidoreductase subunit I, chloroplastic (167 aa).

2 consecutive 4Fe-4S ferredoxin-type domains span residues 55-84 (GRIH…VDWK) and 95-124 (LNYS…MTEE). Residues Cys-64, Cys-67, Cys-70, Cys-74, Cys-104, Cys-107, Cys-110, and Cys-114 each contribute to the [4Fe-4S] cluster site.

The protein belongs to the complex I 23 kDa subunit family. NDH is composed of at least 16 different subunits, 5 of which are encoded in the nucleus. [4Fe-4S] cluster is required as a cofactor.

It localises to the plastid. Its subcellular location is the chloroplast thylakoid membrane. The enzyme catalyses a plastoquinone + NADH + (n+1) H(+)(in) = a plastoquinol + NAD(+) + n H(+)(out). It carries out the reaction a plastoquinone + NADPH + (n+1) H(+)(in) = a plastoquinol + NADP(+) + n H(+)(out). In terms of biological role, NDH shuttles electrons from NAD(P)H:plastoquinone, via FMN and iron-sulfur (Fe-S) centers, to quinones in the photosynthetic chain and possibly in a chloroplast respiratory chain. The immediate electron acceptor for the enzyme in this species is believed to be plastoquinone. Couples the redox reaction to proton translocation, and thus conserves the redox energy in a proton gradient. This Panax ginseng (Korean ginseng) protein is NAD(P)H-quinone oxidoreductase subunit I, chloroplastic.